Reading from the N-terminus, the 117-residue chain is Ribosome-binding factor A (117 aa).

The protein belongs to the RbfA family. Monomer. Binds 30S ribosomal subunits, but not 50S ribosomal subunits or 70S ribosomes.

It is found in the cytoplasm. Its function is as follows. One of several proteins that assist in the late maturation steps of the functional core of the 30S ribosomal subunit. Associates with free 30S ribosomal subunits (but not with 30S subunits that are part of 70S ribosomes or polysomes). Required for efficient processing of 16S rRNA. May interact with the 5'-terminal helix region of 16S rRNA. The polypeptide is Ribosome-binding factor A (Streptococcus thermophilus (strain CNRZ 1066)).